A 214-amino-acid polypeptide reads, in one-letter code: Charged multivesicular body protein 2b-B (214 aa).

Positions 25–55 (QRAITRDRAALEKQEKQLEMEIKKMAKTGNK) form a coiled coil. A disordered region spans residues 178–200 (MAKAPSAAKGLPSTSAAKSKGIS). Positions 202 to 212 (EEIERQLKALG) match the MIT-interacting motif motif.

This sequence belongs to the SNF7 family. Probable core component of the endosomal sorting required for transport complex III (ESCRT-III). ESCRT-III components are thought to multimerize to form a flat lattice on the perimeter membrane of the endosome.

Its subcellular location is the cytoplasm. The protein resides in the cytosol. It localises to the late endosome membrane. Functionally, probable core component of the endosomal sorting required for transport complex III (ESCRT-III) which is involved in multivesicular bodies (MVBs) formation and sorting of endosomal cargo proteins into MVBs. MVBs contain intraluminal vesicles (ILVs) that are generated by invagination and scission from the limiting membrane of the endosome and mostly are delivered to lysosomes enabling degradation of membrane proteins, such as stimulated growth factor receptors, lysosomal enzymes and lipids. The polypeptide is Charged multivesicular body protein 2b-B (chmp2b-b) (Xenopus laevis (African clawed frog)).